Here is a 498-residue protein sequence, read N- to C-terminus: ATP synthase subunit beta, chloroplastic (498 aa).

172-179 (GGAGVGKT) is a binding site for ATP.

Belongs to the ATPase alpha/beta chains family. In terms of assembly, F-type ATPases have 2 components, CF(1) - the catalytic core - and CF(0) - the membrane proton channel. CF(1) has five subunits: alpha(3), beta(3), gamma(1), delta(1), epsilon(1). CF(0) has four main subunits: a(1), b(1), b'(1) and c(9-12).

It localises to the plastid. Its subcellular location is the chloroplast thylakoid membrane. It catalyses the reaction ATP + H2O + 4 H(+)(in) = ADP + phosphate + 5 H(+)(out). Produces ATP from ADP in the presence of a proton gradient across the membrane. The catalytic sites are hosted primarily by the beta subunits. The sequence is that of ATP synthase subunit beta, chloroplastic from Nandina domestica (Heavenly bamboo).